A 266-amino-acid polypeptide reads, in one-letter code: Putative carbamate hydrolase RutD (266 aa).

It belongs to the AB hydrolase superfamily. Hydrolase RutD family.

It carries out the reaction carbamate + 2 H(+) = NH4(+) + CO2. In terms of biological role, involved in pyrimidine catabolism. May facilitate the hydrolysis of carbamate, a reaction that can also occur spontaneously. In Escherichia coli O26:H11 (strain 11368 / EHEC), this protein is Putative carbamate hydrolase RutD.